Consider the following 64-residue polypeptide: Bacteriocin plantaricin ASM1 (64 aa).

A signal peptide spans 1–21 (MSKLVKTLTVDEISKIQTNGG). The segment at residues 61–64 (SYHC) is a cross-link (lanthionine (Ser-Cys)).

In terms of processing, contains 2 disulfide bonds.

Its subcellular location is the secreted. Its function is as follows. Bacteriocin with a narrow antibacterial spectrum. Antibacterial activity against the Gram-positive bacteria L.plantarun, L.pentosus, L.curvatus, L.lindneri, L.mesenteroides and E.faecilis. Lacks antibacterial activity against the Gram-positive bacteria L.brevis, L.sakei, L.lactis, P.acidilactici, B.subtilis, B.cereus, L.monocytogenes and S.aureus, and against the Gram-negative bacteria E.coli and S.typhimurium. This Lactiplantibacillus plantarum (Lactobacillus plantarum) protein is Bacteriocin plantaricin ASM1.